The chain runs to 560 residues: Arginine--tRNA ligase (560 aa).

The short motif at 135–145 (ANPTGLLHMGN) is the 'HIGH' region element.

Belongs to the class-I aminoacyl-tRNA synthetase family. Monomer.

It localises to the cytoplasm. The catalysed reaction is tRNA(Arg) + L-arginine + ATP = L-arginyl-tRNA(Arg) + AMP + diphosphate. In Moorella thermoacetica (strain ATCC 39073 / JCM 9320), this protein is Arginine--tRNA ligase.